The chain runs to 273 residues: Ribosomal RNA small subunit methyltransferase A (273 aa).

S-adenosyl-L-methionine contacts are provided by Asn-18, Leu-20, Gly-45, Glu-66, Asp-91, and Asn-113.

The protein belongs to the class I-like SAM-binding methyltransferase superfamily. rRNA adenine N(6)-methyltransferase family. RsmA subfamily.

It localises to the cytoplasm. The catalysed reaction is adenosine(1518)/adenosine(1519) in 16S rRNA + 4 S-adenosyl-L-methionine = N(6)-dimethyladenosine(1518)/N(6)-dimethyladenosine(1519) in 16S rRNA + 4 S-adenosyl-L-homocysteine + 4 H(+). Its function is as follows. Specifically dimethylates two adjacent adenosines (A1518 and A1519) in the loop of a conserved hairpin near the 3'-end of 16S rRNA in the 30S particle. May play a critical role in biogenesis of 30S subunits. The protein is Ribosomal RNA small subunit methyltransferase A of Cronobacter sakazakii (strain ATCC BAA-894) (Enterobacter sakazakii).